The following is a 1184-amino-acid chain: Protein stu1 (1184 aa).

HEAT repeat units lie at residues Phe-92–Val-130 and Arg-162–Ala-194. 2 stretches are compositionally biased toward basic and acidic residues: residues Ser-229 to Pro-240 and Glu-308 to Thr-317. Positions Ser-229 to Ser-336 are disordered. Residues Val-463–Gln-499 form an HEAT 3 repeat. Disordered stretches follow at residues Leu-564–Leu-584 and Ala-602–Glu-906. Residues Asn-572–Leu-584 are compositionally biased toward polar residues. Low complexity predominate over residues Ala-640–Pro-649. Residues Ser-723–Ala-737 show a composition bias toward polar residues. 2 stretches are compositionally biased toward basic and acidic residues: residues Ala-787–Leu-811 and Glu-882–Glu-895.

It belongs to the CLASP family. In terms of assembly, interacts with microtubules.

The protein resides in the cytoplasm. The protein localises to the cytoskeleton. It localises to the nucleus. It is found in the spindle. Its function is as follows. Microtubule binding protein that promotes the stabilization of dynamic microtubules. Required for mitotic spindle formation. The chain is Protein stu1 (stu1) from Aspergillus oryzae (strain ATCC 42149 / RIB 40) (Yellow koji mold).